Consider the following 85-residue polypeptide: Keratin-associated protein 7-1 (85 aa).

A 12 X 2 AA repeats of G-[YCGS] region spans residues 37 to 82; it reads GSPLGYGCNGYSSLGYGFGGSSFSNLGCGYGGSFYRPWGSGSGFGY.

Belongs to the KRTAP type 7 family. As to quaternary structure, interacts with wool keratins. In terms of tissue distribution, wool.

In the wool cortex, wool keratin intermediate filaments are embedded in an interfilamentous matrix, consisting of hair keratin-associated proteins (KRTAP), which are essential for the formation of a rigid and resistant wool shaft through their extensive disulfide bond cross-linking with abundant cysteine residues of wool keratins. The matrix proteins include the high-sulfur and high-glycine-tyrosine keratins. The sequence is that of Keratin-associated protein 7-1 (KRTAP7-1) from Ovis aries (Sheep).